A 108-amino-acid chain; its full sequence is Thaicobrin (108 aa).

In terms of domain architecture, B30.2/SPRY spans 1–108; that stretch reads SPPGNWQKAD…IWQKGLWWLG (108 aa).

This sequence belongs to the ohanin/vespryn family. Expressed by the venom gland.

The protein resides in the secreted. Its function is as follows. Neurotoxin that produces dose-dependent hypolocomotion and hyperalgesia in mice. May directly act on the central nervous system, as it is 6500-fold more potent when administered intracerebroventricularly than intraperitoneal. This Naja kaouthia (Monocled cobra) protein is Thaicobrin.